Here is a 375-residue protein sequence, read N- to C-terminus: Glutamate 5-kinase (375 aa).

Residue lysine 17 coordinates ATP. Serine 57, aspartate 144, and asparagine 156 together coordinate substrate. An ATP-binding site is contributed by 176 to 177 (TD). The PUA domain occupies 283–361 (KGRLWLDTGA…HQIEQILGYV (79 aa)).

It belongs to the glutamate 5-kinase family.

Its subcellular location is the cytoplasm. It catalyses the reaction L-glutamate + ATP = L-glutamyl 5-phosphate + ADP. The protein operates within amino-acid biosynthesis; L-proline biosynthesis; L-glutamate 5-semialdehyde from L-glutamate: step 1/2. Its function is as follows. Catalyzes the transfer of a phosphate group to glutamate to form L-glutamate 5-phosphate. This chain is Glutamate 5-kinase, found in Nitrosococcus oceani (strain ATCC 19707 / BCRC 17464 / JCM 30415 / NCIMB 11848 / C-107).